We begin with the raw amino-acid sequence, 91 residues long: Probable Fe(2+)-trafficking protein (91 aa).

The protein belongs to the Fe(2+)-trafficking protein family.

Functionally, could be a mediator in iron transactions between iron acquisition and iron-requiring processes, such as synthesis and/or repair of Fe-S clusters in biosynthetic enzymes. The chain is Probable Fe(2+)-trafficking protein from Histophilus somni (strain 129Pt) (Haemophilus somnus).